The primary structure comprises 406 residues: Tryptophan synthase beta chain (406 aa).

Lysine 99 is modified (N6-(pyridoxal phosphate)lysine).

Belongs to the TrpB family. In terms of assembly, tetramer of two alpha and two beta chains. It depends on pyridoxal 5'-phosphate as a cofactor.

The enzyme catalyses (1S,2R)-1-C-(indol-3-yl)glycerol 3-phosphate + L-serine = D-glyceraldehyde 3-phosphate + L-tryptophan + H2O. Its pathway is amino-acid biosynthesis; L-tryptophan biosynthesis; L-tryptophan from chorismate: step 5/5. In terms of biological role, the beta subunit is responsible for the synthesis of L-tryptophan from indole and L-serine. The protein is Tryptophan synthase beta chain of Rhizobium etli (strain CIAT 652).